Here is a 366-residue protein sequence, read N- to C-terminus: Fructose-bisphosphate aldolase 1 (366 aa).

Residues Arg-56 and Lys-147 each contribute to the substrate site. Catalysis depends on Glu-189, which acts as the Proton acceptor. Lys-231 (schiff-base intermediate with dihydroxyacetone-P) is an active-site residue.

This sequence belongs to the class I fructose-bisphosphate aldolase family. Ubiquitous.

The enzyme catalyses beta-D-fructose 1,6-bisphosphate = D-glyceraldehyde 3-phosphate + dihydroxyacetone phosphate. Its pathway is carbohydrate degradation; glycolysis; D-glyceraldehyde 3-phosphate and glycerone phosphate from D-glucose: step 4/4. In terms of biological role, may be involved in the metabolism of fructose-bisphosphate (beta-D-fructose 1,6-bisphosphate) and of fructose 1-phosphate. The sequence is that of Fructose-bisphosphate aldolase 1 (aldo-1) from Caenorhabditis elegans.